A 469-amino-acid chain; its full sequence is uncharacterized protein (469 aa).

This is an uncharacterized protein from Treponema pallidum (strain Nichols).